A 659-amino-acid chain; its full sequence is Oligopeptide-binding protein AmiA (659 aa).

Positions M1–A22 are cleaved as a signal peptide. C23 is lipidated: N-palmitoyl cysteine. C23 carries S-diacylglycerol cysteine lipidation.

It belongs to the bacterial solute-binding protein 5 family.

It is found in the cell membrane. Functionally, part of the binding-protein-dependent transport system for oligopeptides; probably an oligopeptide binding protein. This is Oligopeptide-binding protein AmiA (amiA) from Streptococcus pneumoniae serotype 4 (strain ATCC BAA-334 / TIGR4).